The following is a 197-amino-acid chain: uncharacterized protein (197 aa).

The first 23 residues, Met1–Ala23, serve as a signal peptide directing secretion. Residues Asn19 and Asn26 are each glycosylated (N-linked (GlcNAc...) asparagine). Residues Ser24–Thr61 are Extracellular-facing. The chain crosses the membrane as a helical span at residues Leu62–Phe82. At His83–Ser197 the chain is on the cytoplasmic side. Residues Met94–Ser180 are disordered. Basic and acidic residues-rich tracts occupy residues Arg96–Ser107 and His125–Arg136. Residues Ser147 to Pro161 are compositionally biased toward low complexity. The span at Cys162–Ser171 shows a compositional bias: pro residues.

It localises to the membrane. This is an uncharacterized protein from Macaca fascicularis (Crab-eating macaque).